The following is a 514-amino-acid chain: Bifunctional purine biosynthesis protein PurH (514 aa).

An MGS-like domain is found at 1-145; the sequence is MIKRALISVS…KNYQDVVVIV (145 aa).

Belongs to the PurH family.

It catalyses the reaction (6R)-10-formyltetrahydrofolate + 5-amino-1-(5-phospho-beta-D-ribosyl)imidazole-4-carboxamide = 5-formamido-1-(5-phospho-D-ribosyl)imidazole-4-carboxamide + (6S)-5,6,7,8-tetrahydrofolate. It carries out the reaction IMP + H2O = 5-formamido-1-(5-phospho-D-ribosyl)imidazole-4-carboxamide. It participates in purine metabolism; IMP biosynthesis via de novo pathway; 5-formamido-1-(5-phospho-D-ribosyl)imidazole-4-carboxamide from 5-amino-1-(5-phospho-D-ribosyl)imidazole-4-carboxamide (10-formyl THF route): step 1/1. It functions in the pathway purine metabolism; IMP biosynthesis via de novo pathway; IMP from 5-formamido-1-(5-phospho-D-ribosyl)imidazole-4-carboxamide: step 1/1. This chain is Bifunctional purine biosynthesis protein PurH, found in Acetivibrio thermocellus (strain ATCC 27405 / DSM 1237 / JCM 9322 / NBRC 103400 / NCIMB 10682 / NRRL B-4536 / VPI 7372) (Clostridium thermocellum).